A 197-amino-acid polypeptide reads, in one-letter code: Ribose 1,5-bisphosphate phosphokinase PhnN (197 aa).

ATP is bound at residue 21–28 (GPSGAGKD).

It belongs to the ribose 1,5-bisphosphokinase family.

It catalyses the reaction alpha-D-ribose 1,5-bisphosphate + ATP = 5-phospho-alpha-D-ribose 1-diphosphate + ADP. Its pathway is metabolic intermediate biosynthesis; 5-phospho-alpha-D-ribose 1-diphosphate biosynthesis; 5-phospho-alpha-D-ribose 1-diphosphate from D-ribose 5-phosphate (route II): step 3/3. Catalyzes the phosphorylation of ribose 1,5-bisphosphate to 5-phospho-D-ribosyl alpha-1-diphosphate (PRPP). The protein is Ribose 1,5-bisphosphate phosphokinase PhnN of Rhizobium etli (strain CIAT 652).